Reading from the N-terminus, the 494-residue chain is Alpha-amylase A (494 aa).

The signal sequence occupies residues 1 to 18 (MFLAKSIVCLALLAVANA). Pyrrolidone carboxylic acid is present on Gln19. The cysteines at positions 46 and 102 are disulfide-linked. Residues Asn116, Arg165, and Asp174 each contribute to the Ca(2+) site. Cys153 and Cys167 are disulfide-bonded. Chloride is bound at residue Arg202. Residue Asp204 is the Nucleophile of the active site. His208 contacts Ca(2+). Residue Glu241 is the Proton donor of the active site. Chloride-binding residues include Asn304 and Arg343. 2 disulfide bridges follow: Cys376-Cys382 and Cys448-Cys460.

Belongs to the glycosyl hydrolase 13 family. In terms of assembly, monomer. Ca(2+) is required as a cofactor. The cofactor is chloride.

The enzyme catalyses Endohydrolysis of (1-&gt;4)-alpha-D-glucosidic linkages in polysaccharides containing three or more (1-&gt;4)-alpha-linked D-glucose units.. The chain is Alpha-amylase A (Amy-p) from Drosophila melanogaster (Fruit fly).